We begin with the raw amino-acid sequence, 518 residues long: uncharacterized protein (518 aa).

The N-terminal stretch at 1-21 is a signal peptide; sequence MWKWKVILLFLAEMFVSGVNG. N-linked (GlcNAc...) asparagine glycosylation is found at Asn-30, Asn-142, Asn-295, Asn-342, Asn-362, Asn-410, and Asn-503. One can recognise a CUB domain in the interval 389–517; the sequence is CPPFGITNSV…RGFWVSITPQ (129 aa).

It is found in the secreted. This is an uncharacterized protein from Caenorhabditis elegans.